Here is a 508-residue protein sequence, read N- to C-terminus: Erythropoietin receptor (508 aa).

Positions 1 to 24 (MDHLGASLWPQVGSLCLLLAGAAW) are cleaved as a signal peptide. The Extracellular portion of the chain corresponds to 25–250 (APPPNLPDPK…SLLTPSDLDP (226 aa)). Cysteine 52 and cysteine 62 are joined by a disulfide. The N-linked (GlcNAc...) asparagine glycan is linked to asparagine 76. Cysteine 91 and cysteine 107 are joined by a disulfide. The region spanning 147 to 247 (APVGLVARLA…EPVSLLTPSD (101 aa)) is the Fibronectin type-III domain. The WSXWS motif signature appears at 233 to 237 (WSAWS). The chain crosses the membrane as a helical span at residues 251–273 (LILTLSLILVVILVLLTVLALLS). Over 274–508 (HRRALKQKIW…PLPPSYVACS (235 aa)) the chain is Cytoplasmic. Lysine 281 is covalently cross-linked (Glycyl lysine isopeptide (Lys-Gly) (interchain with G-Cter in ubiquitin)). A Box 1 motif motif is present at residues 282–290 (IWPGIPSPE). Residues tyrosine 368 and tyrosine 426 each carry the phosphotyrosine; by JAK2 modification. The ITIM motif motif lies at 452–457 (LKYLYL). Lysine 453 is covalently cross-linked (Glycyl lysine isopeptide (Lys-Gly) (interchain with G-Cter in ubiquitin)). 6 positions are modified to phosphotyrosine; by JAK2: tyrosine 454, tyrosine 456, tyrosine 468, tyrosine 485, tyrosine 489, and tyrosine 504. Residues 454–456 (YLY) form a required for high-affinity SOCS3 binding region. The segment at 467-494 (DYSSGDSQGAQGGLSDGPYSNPYENSLI) is disordered.

It belongs to the type I cytokine receptor family. Type 1 subfamily. Forms homodimers on EPO stimulation. The tyrosine-phosphorylated form interacts with several SH2 domain-containing proteins including LYN, the adapter protein SH2B2, PTPN6, PTPN11, JAK2, PI3 kinases, STAT5A/B, SOCS3, CRKL. Interacts with INPP5D/SHIP1. SH2B2 binding inhibits the JAK-STAT signaling. Interacts with RHEX; this interaction occurs in a erythropoietin (EPO)-dependent manner. Interacts with ATXN2L. Post-translationally, on EPO stimulation, phosphorylated on C-terminal tyrosine residues by JAK2. The phosphotyrosine motifs are also recruitment sites for several SH2-containing proteins and adapter proteins which mediate cell proliferation. Phosphorylation on Tyr-454 is required for PTPN6 interaction, Tyr-426 for PTPN11. Tyr-426 is also required for SOCS3 binding, but Tyr-454/Tyr-456 motif is the preferred binding site. In terms of processing, ubiquitinated by the ECS(SOCS2) complex following ligand-binding and phosphorylation by JAK2, leading to its degradation by the proteasome. Regulation by the ECS(SOCS2) complex acts as a negative feedback loop of erythropoietin-mediated signaling pathway. Ubiquitination at Lys-281 mediates receptor internalization, whereas ubiquitination at Lys-453 promotes trafficking of activated receptors to the lysosomes for degradation. Ubiquitinated by NOSIP; appears to be either multi-monoubiquitinated or polyubiquitinated. Ubiquitination mediates proliferation and survival of EPO-dependent cells. Erythroid cells and erythroid progenitor cells. As to expression, isoform EPOR-F is the most abundant form in EPO-dependent erythroleukemia cells and in late-stage erythroid progenitors. In terms of tissue distribution, isoform EPOR-S and isoform EPOR-T are the predominant forms in bone marrow. Isoform EPOR-S and isoform EPOR-T are the predominant forms in bone marrow. Isoform EPOR-T is the most abundant from in early-stage erythroid progenitor cells.

It localises to the cell membrane. It is found in the secreted. Its function is as follows. Receptor for erythropoietin, which mediates erythropoietin-induced erythroblast proliferation and differentiation. Upon EPO stimulation, EPOR dimerizes triggering the JAK2/STAT5 signaling cascade. In some cell types, can also activate STAT1 and STAT3. May also activate the LYN tyrosine kinase. Functionally, acts as a dominant-negative receptor of EPOR-mediated signaling. The sequence is that of Erythropoietin receptor from Homo sapiens (Human).